Consider the following 293-residue polypeptide: Elongation factor Ts (293 aa).

The segment at T80–V83 is involved in Mg(2+) ion dislocation from EF-Tu.

It belongs to the EF-Ts family.

The protein resides in the cytoplasm. Functionally, associates with the EF-Tu.GDP complex and induces the exchange of GDP to GTP. It remains bound to the aminoacyl-tRNA.EF-Tu.GTP complex up to the GTP hydrolysis stage on the ribosome. The chain is Elongation factor Ts from Paraburkholderia phymatum (strain DSM 17167 / CIP 108236 / LMG 21445 / STM815) (Burkholderia phymatum).